The following is a 422-amino-acid chain: Probable glucuronosyltransferase Os01g0926400 (422 aa).

The Cytoplasmic segment spans residues 1–8 (MGTRPCAG). The chain crosses the membrane as a helical; Signal-anchor for type II membrane protein span at residues 9–29 (VASAVAAAVAVLLLAVSCFAA). Residues 30-422 (AATTTQKHGR…QGLENDLKPW (393 aa)) lie on the Lumenal side of the membrane. An N-linked (GlcNAc...) asparagine glycan is attached at Asn149.

The protein belongs to the glycosyltransferase 47 family.

Its subcellular location is the golgi apparatus membrane. Its function is as follows. Involved in the synthesis of glucuronoxylan hemicellulose in secondary cell walls. This is Probable glucuronosyltransferase Os01g0926400 from Oryza sativa subsp. japonica (Rice).